The sequence spans 174 residues: Crossover junction endodeoxyribonuclease RuvC (174 aa).

Catalysis depends on residues Asp-8, Glu-67, and Asp-139. Mg(2+) is bound by residues Asp-8, Glu-67, and Asp-139.

The protein belongs to the RuvC family. In terms of assembly, homodimer which binds Holliday junction (HJ) DNA. The HJ becomes 2-fold symmetrical on binding to RuvC with unstacked arms; it has a different conformation from HJ DNA in complex with RuvA. In the full resolvosome a probable DNA-RuvA(4)-RuvB(12)-RuvC(2) complex forms which resolves the HJ. Mg(2+) serves as cofactor.

Its subcellular location is the cytoplasm. The catalysed reaction is Endonucleolytic cleavage at a junction such as a reciprocal single-stranded crossover between two homologous DNA duplexes (Holliday junction).. In terms of biological role, the RuvA-RuvB-RuvC complex processes Holliday junction (HJ) DNA during genetic recombination and DNA repair. Endonuclease that resolves HJ intermediates. Cleaves cruciform DNA by making single-stranded nicks across the HJ at symmetrical positions within the homologous arms, yielding a 5'-phosphate and a 3'-hydroxyl group; requires a central core of homology in the junction. The consensus cleavage sequence is 5'-(A/T)TT(C/G)-3'. Cleavage occurs on the 3'-side of the TT dinucleotide at the point of strand exchange. HJ branch migration catalyzed by RuvA-RuvB allows RuvC to scan DNA until it finds its consensus sequence, where it cleaves and resolves the cruciform DNA. The sequence is that of Crossover junction endodeoxyribonuclease RuvC from Pseudomonas putida (strain GB-1).